A 239-amino-acid polypeptide reads, in one-letter code: NAD(P)H-quinone oxidoreductase subunit K, chloroplastic (239 aa).

Positions 43, 44, 108, and 139 each coordinate [4Fe-4S] cluster. Residues 217–239 are disordered; it reads KSSVSSRELGNESGKEDVSIQNK. Basic and acidic residues predominate over residues 225 to 239; that stretch reads LGNESGKEDVSIQNK.

The protein belongs to the complex I 20 kDa subunit family. In terms of assembly, NDH is composed of at least 16 different subunits, 5 of which are encoded in the nucleus. Requires [4Fe-4S] cluster as cofactor.

The protein localises to the plastid. The protein resides in the chloroplast thylakoid membrane. It catalyses the reaction a plastoquinone + NADH + (n+1) H(+)(in) = a plastoquinol + NAD(+) + n H(+)(out). The catalysed reaction is a plastoquinone + NADPH + (n+1) H(+)(in) = a plastoquinol + NADP(+) + n H(+)(out). NDH shuttles electrons from NAD(P)H:plastoquinone, via FMN and iron-sulfur (Fe-S) centers, to quinones in the photosynthetic chain and possibly in a chloroplast respiratory chain. The immediate electron acceptor for the enzyme in this species is believed to be plastoquinone. Couples the redox reaction to proton translocation, and thus conserves the redox energy in a proton gradient. This Acorus calamus var. americanus (American sweet flag) protein is NAD(P)H-quinone oxidoreductase subunit K, chloroplastic.